Here is a 253-residue protein sequence, read N- to C-terminus: 5'/3'-nucleotidase SurE (253 aa).

Residues D8, D9, S39, and N92 each coordinate a divalent metal cation.

This sequence belongs to the SurE nucleotidase family. It depends on a divalent metal cation as a cofactor.

It localises to the cytoplasm. The enzyme catalyses a ribonucleoside 5'-phosphate + H2O = a ribonucleoside + phosphate. It carries out the reaction a ribonucleoside 3'-phosphate + H2O = a ribonucleoside + phosphate. It catalyses the reaction [phosphate](n) + H2O = [phosphate](n-1) + phosphate + H(+). Functionally, nucleotidase with a broad substrate specificity as it can dephosphorylate various ribo- and deoxyribonucleoside 5'-monophosphates and ribonucleoside 3'-monophosphates with highest affinity to 3'-AMP. Also hydrolyzes polyphosphate (exopolyphosphatase activity) with the preference for short-chain-length substrates (P20-25). Might be involved in the regulation of dNTP and NTP pools, and in the turnover of 3'-mononucleotides produced by numerous intracellular RNases (T1, T2, and F) during the degradation of various RNAs. The chain is 5'/3'-nucleotidase SurE from Serratia proteamaculans (strain 568).